Here is a 328-residue protein sequence, read N- to C-terminus: Flagellar motor switch protein FliM (328 aa).

The tract at residues 1 to 45 (MSDVLSQEEINQLIEALMKGELKEEDLLKEEEEKKVKPYDFKRPS) is interaction with unphosphorylated CheY.

It belongs to the FliM family. Interacts (via N-terminus) with unphosphorylated CheY. Interacts (via central domain) with FliG (via central domain or via central domain and C-terminus).

The protein localises to the cell inner membrane. Its subcellular location is the bacterial flagellum basal body. Its function is as follows. FliM is one of three proteins (FliG, FliN, FliM) that forms the rotor-mounted switch complex (C ring), located at the base of the basal body. This complex interacts with the CheY and CheX chemotaxis proteins, in addition to contacting components of the motor that determine the direction of flagellar rotation. This is Flagellar motor switch protein FliM from Thermotoga maritima (strain ATCC 43589 / DSM 3109 / JCM 10099 / NBRC 100826 / MSB8).